The chain runs to 74 residues: uncharacterized protein (74 aa).

This is an uncharacterized protein from Invertebrate iridescent virus 6 (IIV-6).